The primary structure comprises 519 residues: Glucose-1-phosphate adenylyltransferase large subunit 2, chloroplastic/amyloplastic (519 aa).

Belongs to the bacterial/plant glucose-1-phosphate adenylyltransferase family. Heterotetramer. In terms of tissue distribution, leaves and tubers.

The protein resides in the plastid. It localises to the chloroplast. It is found in the amyloplast. It catalyses the reaction alpha-D-glucose 1-phosphate + ATP + H(+) = ADP-alpha-D-glucose + diphosphate. Its pathway is glycan biosynthesis; starch biosynthesis. With respect to regulation, activated by 3'phosphoglycerate, inhibited by orthophosphate. Allosteric regulation. This protein plays a role in synthesis of starch. It catalyzes the synthesis of the activated glycosyl donor, ADP-glucose from Glc-1-P and ATP. The chain is Glucose-1-phosphate adenylyltransferase large subunit 2, chloroplastic/amyloplastic (AGPS2) from Solanum tuberosum (Potato).